The following is a 157-amino-acid chain: Protein FAM162B (157 aa).

The chain crosses the membrane as a helical span at residues 104 to 123; that stretch reads ACYIMIGLTIVACFAVIVSA.

This sequence belongs to the UPF0389 family.

It localises to the membrane. This is Protein FAM162B (Fam162b) from Mus musculus (Mouse).